A 415-amino-acid chain; its full sequence is Thyroxine-binding globulin (415 aa).

The N-terminal stretch at Met1–Cys20 is a signal peptide. Residues Asn36, Asn99, Asn165, and Asn253 are each glycosylated (N-linked (GlcNAc...) asparagine). Thyroxine-binding residues include Asn293 and Arg398.

It belongs to the serpin family.

It localises to the secreted. Its function is as follows. Major thyroid hormone transport protein in serum. This is Thyroxine-binding globulin (SERPINA7) from Pan troglodytes (Chimpanzee).